Reading from the N-terminus, the 707-residue chain is Serine/threonine protein kinase UL97 (707 aa).

Residues 1–14 show a composition bias toward low complexity; the sequence is MSSALRSRARSASL. Disordered regions lie at residues 1–32, 115–146, 176–199, and 231–264; these read MSSA…PSRA, EKED…GDGY, FTGG…PLRP, and ESQD…EADS. Residues 115-127 are compositionally biased toward basic and acidic residues; sequence EKEDAASDKENLR. Over residues 178-188 the composition is skewed to low complexity; that stretch reads GGSDPSDSVSG. Residues 337 to 345 and Lys359 contribute to the ATP site; that span reads LGQGSFGEV. The active-site Proton acceptor is Asp456.

It belongs to the protein kinase superfamily. Tyr protein kinase family. HCMV ganciclovir subfamily. Interacts with UL83. Autophosphorylates on serine and threonine residues.

The protein resides in the virion. The catalysed reaction is L-seryl-[protein] + ATP = O-phospho-L-seryl-[protein] + ADP + H(+). It catalyses the reaction L-threonyl-[protein] + ATP = O-phospho-L-threonyl-[protein] + ADP + H(+). In terms of biological role, serine/threonine protein kinase that plays important roles in several processes including nuclear viral egress, viral replication or regulation of host cell cycle progression. Participates in the acquisition of tegument during virion morphogenesis in the nucleus. Redistributes the host nuclear lamina by phosphorylating cellular Lamins-A/C. Plays a role in viral DNA synthesis by phosphorylating the DNA polymerase processivity factor UL44. Stimulates host cell cycle to support viral DNA synthesis by phosphorylating host retinoblastoma/RB1 protein. Additional substrates have been identified including host EF1D or H2B. Also phosphorylates host SAMHD1 and thereby counteracts its antiviral effect by reducing its dNTP hydrolase activity. The chain is Serine/threonine protein kinase UL97 (UL97) from Human cytomegalovirus (strain Towne) (HHV-5).